A 258-amino-acid chain; its full sequence is Aquaglyceroporin (258 aa).

Over 1–11 (MHMLFYKSYVR) the chain is Cytoplasmic. The chain crosses the membrane as a helical span at residues 12–32 (EFIGEFLGTFVLMFLGEGATA). Residues 33–45 (NFHTTGLSGDWYK) lie on the Extracellular side of the membrane. Residues 46–66 (LCLGWGLAVFFGILVSAKLSG) form a helical membrane-spanning segment. Glycerol contacts are provided by Gly-66, Ala-67, and Asn-70. Residues 67–87 (AHLNLAVSIGLSSINKFDLKK) lie on the Cytoplasmic side of the membrane. A helical transmembrane segment spans residues 88–108 (IPVYFFAQLLGAFVGTSTVYG). At 109–135 (LYHGFISNSKIPQFAWETSRNPSISLT) the chain is on the extracellular side. Ser-127 contributes to the glycerol binding site. Residues 136–156 (GAFFNELILTGILLLVILVVV) traverse the membrane as a helical segment. At 157–171 (DENICGKFHILKLSS) the chain is on the cytoplasmic side. Residues 172 to 192 (VVGLIILCIGITFGGNTGFAL) form a helical membrane-spanning segment. Glycerol-binding residues include Gly-189, Phe-190, Asn-193, and Arg-196. Residues 193 to 217 (NPSRDLGSRFLSLIAYGKDTFTKDN) lie on the Extracellular side of the membrane. A helical transmembrane segment spans residues 218–238 (FYFWVPLVAPCVGSVVFCQFY). Over 239-258 (DKVICPLVDLANNEKDGVDL) the chain is Cytoplasmic.

It belongs to the MIP/aquaporin (TC 1.A.8) family. In terms of assembly, homotetramer.

It localises to the cell membrane. The catalysed reaction is H2O(in) = H2O(out). The enzyme catalyses glycerol(in) = glycerol(out). It carries out the reaction urea(in) = urea(out). It catalyses the reaction NH4(+)(in) = NH4(+)(out). The catalysed reaction is methylamine(out) = methylamine(in). The enzyme catalyses formamide(out) = formamide(in). Mediates water and glycerol transport across the cell membrane. Permeable to sugar alcohols of up to five carbons and urea. Permeable to ammonia, methylamine and formamide. The protein is Aquaglyceroporin of Plasmodium falciparum (isolate 3D7).